A 279-amino-acid chain; its full sequence is Protein phosphatase 1 regulatory subunit 3E (279 aa).

Serine 16 and serine 33 each carry phosphoserine. The disordered stretch occupies residues 28–87; it reads RSQRPSLEEESEEEPGEGGTRPGARSRAHVPGRGRRARSAPAGGGGARTARSRSPDTRKR. Residues 51–65 show a composition bias toward basic residues; sequence ARSRAHVPGRGRRAR. The residue at position 66 (serine 66) is a Phosphoserine. Positions 87-90 match the PP1-binding motif motif; it reads RVRF. Residues 154-259 enclose the CBM21 domain; the sequence is AARLQAQRIC…NNGGRDYALL (106 aa). Residues 176–198 are glycogen-binding motif; the sequence is GSARVLDLAYEKRVSVRWSADGW. Residues 248 to 256 form a substrate-binding motif region; sequence WDNNGGRDY.

Functionally, acts as a glycogen-targeting subunit for PP1. PP1 is involved in glycogen metabolism and contributes to the activation of glycogen synthase leading to an increase in glycogen synthesis. The polypeptide is Protein phosphatase 1 regulatory subunit 3E (Ppp1r3e) (Mus musculus (Mouse)).